A 227-amino-acid polypeptide reads, in one-letter code: PKHD-type hydroxylase PHZ_c0292 (227 aa).

One can recognise a Fe2OG dioxygenase domain in the interval 78-178; it reads VVFPPLFNRY…RVCSFFWIQS (101 aa). The Fe cation site is built by His96, Asp98, and His159. Arg169 contributes to the 2-oxoglutarate binding site.

It depends on Fe(2+) as a cofactor. L-ascorbate is required as a cofactor.

This Phenylobacterium zucineum (strain HLK1) protein is PKHD-type hydroxylase PHZ_c0292.